Here is a 1090-residue protein sequence, read N- to C-terminus: Solute carrier family 38 member 10 (1090 aa).

10 helical membrane-spanning segments follow: residues 9 to 31 (WGLITNVVNSIVGVSVLTMPFCF), 36 to 58 (IVLGALLLVFCSWMTHQSCMFLV), 84 to 104 (LVETSMIGLMLGSCITFYVVI), 123 to 143 (TVRVFLLFAVSLFIVLPLSLQ), 153 to 173 (FSAMALLFYTVFMFVIVLSSL), 229 to 249 (IFASSLNVVTAFYVMVGFFGY), 272 to 292 (MIRVGFVMSVAVGFPMMILPC), 323 to 343 (VLTLSVVFGTMVGGVMIPNVE), 345 to 365 (ILGFTGATMGSLICFICPALI), and 378 to 398 (VVLWVGLGILVVSTLTTLSVT). The residue at position 441 (S441) is a Phosphoserine. Basic and acidic residues-rich tracts occupy residues 441-454 (SQEKLKPAEDKEVL), 493-508 (EAHRHEPPIPHDKVVV), 517-528 (PEEKKPPPRLPD), 544-560 (ESEKEKQEPERGGEGKR), 587-596 (PRKEDSRPGN), and 607-623 (DSVELKALAADDGREPA). Disordered regions lie at residues 441–675 (SQEK…AGSK), 729–831 (EIRQ…IDLR), and 857–1037 (KAAP…ELAP). 2 positions are modified to phosphoserine: S608 and S636. Basic and acidic residues-rich tracts occupy residues 654 to 665 (EAAEQREKKEAE), 729 to 744 (EIRQQRQEGEEDKPKP), and 758 to 767 (GQEEEAEHAG). A Phosphothreonine modification is found at T769. Residue S887 is modified to Phosphoserine. Over residues 923–936 (RQSGPTKAPVQTQA) the composition is skewed to polar residues. 3 stretches are compositionally biased toward basic and acidic residues: residues 954 to 973 (PEVRSEAPRAVHIPPEEQHK), 1004 to 1013 (ENAKPNRDLK), and 1026 to 1037 (DLASHPEQELAP).

Belongs to the amino acid/polyamine transporter 2 family. In terms of tissue distribution, expressed in neurons, astrocytes and epithelial cells scattered throughout the central nervous system structures including striatum, ependyma, cerebral cortex, hippocampus, hypothalamus, thalamus, pons, and cerebellum (at protein level). Highly expressed in paraventricular hypothalamic nucleus, suprachiasmatic nucleus, anterior hypothalamic area central part, in lateral ventricule and in dorsal 3rd ventricule (at protein level). Expressed in choroid plexus epithelial cells (at protein level).

It is found in the membrane. It catalyses the reaction L-glutamate(out) = L-glutamate(in). The catalysed reaction is L-glutamine(out) = L-glutamine(in). The enzyme catalyses L-alanine(in) = L-alanine(out). It carries out the reaction L-serine(in) = L-serine(out). It catalyses the reaction L-leucine(in) = L-leucine(out). Facilitates bidirectional transport of amino acids. May act as a glutamate sensor that regulates glutamate-glutamine cycle and mTOR signaling in the brain. The transport mechanism remains to be elucidated. The polypeptide is Solute carrier family 38 member 10 (Mus musculus (Mouse)).